Here is a 310-residue protein sequence, read N- to C-terminus: Cytochrome f (310 aa).

An N-terminal signal peptide occupies residues 1–23 (MRRLLSSTFAALIVGLAVFSAPA). 4 residues coordinate heme: Tyr-28, Cys-48, Cys-51, and His-52. The helical transmembrane segment at 277–297 (IYGMLAFFAAVALAQIMLVLK) threads the bilayer.

It belongs to the cytochrome f family. In terms of assembly, the 4 large subunits of the cytochrome b6-f complex are cytochrome b6, subunit IV (17 kDa polypeptide, PetD), cytochrome f and the Rieske protein, while the 4 small subunits are PetG, PetL, PetM and PetN. The complex functions as a dimer. Heme serves as cofactor.

It localises to the cellular thylakoid membrane. In terms of biological role, component of the cytochrome b6-f complex, which mediates electron transfer between photosystem II (PSII) and photosystem I (PSI), cyclic electron flow around PSI, and state transitions. This chain is Cytochrome f, found in Synechococcus sp. (strain CC9311).